The sequence spans 356 residues: S-adenosylmethionine:tRNA ribosyltransferase-isomerase (356 aa).

It belongs to the QueA family. In terms of assembly, monomer.

The protein localises to the cytoplasm. It carries out the reaction 7-aminomethyl-7-carbaguanosine(34) in tRNA + S-adenosyl-L-methionine = epoxyqueuosine(34) in tRNA + adenine + L-methionine + 2 H(+). Its pathway is tRNA modification; tRNA-queuosine biosynthesis. Transfers and isomerizes the ribose moiety from AdoMet to the 7-aminomethyl group of 7-deazaguanine (preQ1-tRNA) to give epoxyqueuosine (oQ-tRNA). The polypeptide is S-adenosylmethionine:tRNA ribosyltransferase-isomerase (Shigella boydii serotype 4 (strain Sb227)).